The primary structure comprises 71 residues: DNA-directed RNA polymerases I, II, and III subunit RPABC5 (71 aa).

Residues Cys-7, Cys-10, Cys-44, and Cys-45 each contribute to the Zn(2+) site.

The protein belongs to the archaeal Rpo10/eukaryotic RPB10 RNA polymerase subunit family. In terms of assembly, component of the RNA polymerase I (Pol I), RNA polymerase II (Pol II) and RNA polymerase III (Pol III) complexes consisting of at least 13, 12 and 17 subunits, respectively.

Its subcellular location is the nucleus. Its function is as follows. DNA-dependent RNA polymerase catalyzes the transcription of DNA into RNA using the four ribonucleoside triphosphates as substrates. Common component of RNA polymerases I, II and III which synthesize ribosomal RNA precursors, mRNA precursors and many functional non-coding RNAs, and a small RNAs, such as 5S rRNA and tRNAs, respectively. Pol II is the central component of the basal RNA polymerase II transcription machinery. Pols are composed of mobile elements that move relative to each other. In Pol II, RBP10 is part of the core element with the central large cleft. This is DNA-directed RNA polymerases I, II, and III subunit RPABC5 from Brassica napus (Rape).